Here is a 202-residue protein sequence, read N- to C-terminus: Holliday junction branch migration complex subunit RuvA (202 aa).

Positions 1–64 (MIGYLKGQIL…YDGTVLYGFL (64 aa)) are domain I. The segment at 65-146 (TKEDKQLWAI…AVTIAGVPKI (82 aa)) is domain II. A flexible linker region spans residues 147–155 (KIEGEAPFM). Residues 155 to 202 (MSEVMMALTALGYSPMEARKAIDQLYKTGLANDSVENIIRAALRILKK) form a domain III region.

It belongs to the RuvA family. As to quaternary structure, homotetramer. Forms an RuvA(8)-RuvB(12)-Holliday junction (HJ) complex. HJ DNA is sandwiched between 2 RuvA tetramers; dsDNA enters through RuvA and exits via RuvB. An RuvB hexamer assembles on each DNA strand where it exits the tetramer. Each RuvB hexamer is contacted by two RuvA subunits (via domain III) on 2 adjacent RuvB subunits; this complex drives branch migration. In the full resolvosome a probable DNA-RuvA(4)-RuvB(12)-RuvC(2) complex forms which resolves the HJ.

The protein localises to the cytoplasm. Its function is as follows. The RuvA-RuvB-RuvC complex processes Holliday junction (HJ) DNA during genetic recombination and DNA repair, while the RuvA-RuvB complex plays an important role in the rescue of blocked DNA replication forks via replication fork reversal (RFR). RuvA specifically binds to HJ cruciform DNA, conferring on it an open structure. The RuvB hexamer acts as an ATP-dependent pump, pulling dsDNA into and through the RuvAB complex. HJ branch migration allows RuvC to scan DNA until it finds its consensus sequence, where it cleaves and resolves the cruciform DNA. This Elusimicrobium minutum (strain Pei191) protein is Holliday junction branch migration complex subunit RuvA.